The following is a 149-amino-acid chain: Transcriptional repressor NrdR (149 aa).

The segment at 3–34 (CPFCSENDTKVIDSRLVADGHQVRRRRQCLAC) is a zinc-finger region. Residues 49–139 (PKVIKSNGNR…VYRSFEDIRE (91 aa)) enclose the ATP-cone domain.

Belongs to the NrdR family. Requires Zn(2+) as cofactor.

Functionally, negatively regulates transcription of bacterial ribonucleotide reductase nrd genes and operons by binding to NrdR-boxes. This chain is Transcriptional repressor NrdR, found in Vibrio atlanticus (strain LGP32) (Vibrio splendidus (strain Mel32)).